A 316-amino-acid polypeptide reads, in one-letter code: Transaldolase 2 (316 aa).

Lys131 (schiff-base intermediate with substrate) is an active-site residue.

It belongs to the transaldolase family. Type 1 subfamily. In terms of assembly, homodimer.

It localises to the cytoplasm. It carries out the reaction D-sedoheptulose 7-phosphate + D-glyceraldehyde 3-phosphate = D-erythrose 4-phosphate + beta-D-fructose 6-phosphate. The protein operates within carbohydrate degradation; pentose phosphate pathway; D-glyceraldehyde 3-phosphate and beta-D-fructose 6-phosphate from D-ribose 5-phosphate and D-xylulose 5-phosphate (non-oxidative stage): step 2/3. Transaldolase is important for the balance of metabolites in the pentose-phosphate pathway. The protein is Transaldolase 2 of Salmonella choleraesuis (strain SC-B67).